The following is a 427-amino-acid chain: UDP-N-acetylglucosamine 1-carboxyvinyltransferase (427 aa).

Residue 22-23 (KN) coordinates phosphoenolpyruvate. Arginine 99 is a UDP-N-acetyl-alpha-D-glucosamine binding site. Catalysis depends on cysteine 123, which acts as the Proton donor. 2-(S-cysteinyl)pyruvic acid O-phosphothioketal is present on cysteine 123. Residues 128–132 (RPIDL), aspartate 313, and isoleucine 335 contribute to the UDP-N-acetyl-alpha-D-glucosamine site.

Belongs to the EPSP synthase family. MurA subfamily.

The protein localises to the cytoplasm. The catalysed reaction is phosphoenolpyruvate + UDP-N-acetyl-alpha-D-glucosamine = UDP-N-acetyl-3-O-(1-carboxyvinyl)-alpha-D-glucosamine + phosphate. It functions in the pathway cell wall biogenesis; peptidoglycan biosynthesis. Cell wall formation. Adds enolpyruvyl to UDP-N-acetylglucosamine. The polypeptide is UDP-N-acetylglucosamine 1-carboxyvinyltransferase (Novosphingobium aromaticivorans (strain ATCC 700278 / DSM 12444 / CCUG 56034 / CIP 105152 / NBRC 16084 / F199)).